Consider the following 226-residue polypeptide: Biosynthetic peptidoglycan transglycosylase (226 aa).

Residues 7-29 (VMALSAIGLLLLPYLLTPLYRIG) form a helical membrane-spanning segment.

The protein belongs to the glycosyltransferase 51 family.

It localises to the cell inner membrane. It carries out the reaction [GlcNAc-(1-&gt;4)-Mur2Ac(oyl-L-Ala-gamma-D-Glu-L-Lys-D-Ala-D-Ala)](n)-di-trans,octa-cis-undecaprenyl diphosphate + beta-D-GlcNAc-(1-&gt;4)-Mur2Ac(oyl-L-Ala-gamma-D-Glu-L-Lys-D-Ala-D-Ala)-di-trans,octa-cis-undecaprenyl diphosphate = [GlcNAc-(1-&gt;4)-Mur2Ac(oyl-L-Ala-gamma-D-Glu-L-Lys-D-Ala-D-Ala)](n+1)-di-trans,octa-cis-undecaprenyl diphosphate + di-trans,octa-cis-undecaprenyl diphosphate + H(+). Its pathway is cell wall biogenesis; peptidoglycan biosynthesis. Peptidoglycan polymerase that catalyzes glycan chain elongation from lipid-linked precursors. The sequence is that of Biosynthetic peptidoglycan transglycosylase from Nitrobacter winogradskyi (strain ATCC 25391 / DSM 10237 / CIP 104748 / NCIMB 11846 / Nb-255).